The chain runs to 546 residues: 2-isopropylmalate synthase (546 aa).

The Pyruvate carboxyltransferase domain occupies 8–271 (ILIFDTTLRD…NKFFNRNSDS (264 aa)). Mn(2+)-binding residues include Asp-17, His-208, His-210, and Asn-244. Residues 408–546 (QLSLVQVSCG…DKTLLSNPGK (139 aa)) are regulatory domain.

Belongs to the alpha-IPM synthase/homocitrate synthase family. LeuA type 1 subfamily. Homodimer. The cofactor is Mn(2+).

The protein localises to the cytoplasm. It carries out the reaction 3-methyl-2-oxobutanoate + acetyl-CoA + H2O = (2S)-2-isopropylmalate + CoA + H(+). Its pathway is amino-acid biosynthesis; L-leucine biosynthesis; L-leucine from 3-methyl-2-oxobutanoate: step 1/4. Functionally, catalyzes the condensation of the acetyl group of acetyl-CoA with 3-methyl-2-oxobutanoate (2-ketoisovalerate) to form 3-carboxy-3-hydroxy-4-methylpentanoate (2-isopropylmalate). In Prochlorococcus marinus (strain MIT 9215), this protein is 2-isopropylmalate synthase.